The primary structure comprises 437 residues: Interactor protein for cytohesin exchange factors 1 (437 aa).

Residues 41–140 (HADCQGWLYK…WLNKLGSAVI (100 aa)) enclose the PH domain. Disordered stretches follow at residues 143 to 225 (ESTT…PDTV) and 273 to 307 (LSSD…ETKV). Residues 151–162 (CYSESEQEDPEI) are compositionally biased toward acidic residues. Over residues 172-200 (ASQTQSLTAQQASSSSPSLSGTSYSFSSL) the composition is skewed to low complexity. Over residues 201 to 214 (ENTVKTPSSFPSSL) the composition is skewed to polar residues. The span at 273 to 283 (LSSDDTSSLSS) shows a compositional bias: low complexity. CRAC domain regions lie at residues 315 to 320 (KLYKSL) and 339 to 348 (LRKSFVKRCK). The interval 389–437 (KYREWKVMNTLLIQDIYQQQRASPAPDDTDDTPQELKKSPSSPSVENSI) is required for interaction with CYTH2. Positions 406–437 (QQQRASPAPDDTDDTPQELKKSPSSPSVENSI) are disordered. Position 411 is a phosphoserine (Ser411). The segment covering 427–437 (SPSSPSVENSI) has biased composition (polar residues).

As to quaternary structure, interacts with guanine-nucleotide exchange factors PSCD1, PSCD2, PSCD3 and PSCD4. Interacts (via C-terminus) with cytohesin-2 CYTH2.

The protein resides in the cytoplasm. It is found in the cell membrane. In terms of biological role, enhances the promotion of guanine-nucleotide exchange by PSCD2 on ARF6 in a concentration-dependent manner. The sequence is that of Interactor protein for cytohesin exchange factors 1 (IPCEF1) from Homo sapiens (Human).